Reading from the N-terminus, the 375-residue chain is Adiponectin receptor protein 1 (375 aa).

Positions 1–60 (MSSHKGSAGAQGNGAPSGNREADTVELAELGPLLEEKGKRAASSPAKAEEDQACPVPQEE) are disordered. Residues 1–136 (MSSHKGSAGA…SIFRIHTETG (136 aa)) lie on the Cytoplasmic side of the membrane. Residues 137–157 (NIWTHLLGFVLFLFLGILTML) form a helical membrane-spanning segment. The Extracellular segment spans residues 158–170 (RPNMYFMAPLQEK). A helical transmembrane segment spans residues 171 to 191 (VVFGMFFLGAVLCLSFSWLFH). Zn(2+) is bound at residue His191. Residues 192 to 203 (TVYCHSEKVSRT) are Cytoplasmic-facing. The helical transmembrane segment at 204 to 224 (FSKLDYSGIALLIMGSFVPWL) threads the bilayer. At 225 to 234 (YYSFYCSPQP) the chain is on the extracellular side. The chain crosses the membrane as a helical span at residues 235-255 (RLIYLSIVCVLGISAIIVAQW). Residues 256–264 (DRFATPKHR) lie on the Cytoplasmic side of the membrane. Residues 265 to 285 (QTRAGVFLGLGLSGVVPTMHF) form a helical membrane-spanning segment. Residues 286–298 (TIAEGFVKATTVG) lie on the Extracellular side of the membrane. Residues 299–319 (QMGWFFLMAVMYITGAGLYAA) traverse the membrane as a helical segment. Topologically, residues 320 to 337 (RIPERFFPGKFDIWFQSH) are cytoplasmic. 2 residues coordinate Zn(2+): His337 and His341. A helical transmembrane segment spans residues 338-358 (QIFHVLVVAAAFVHFYGVSNL). Residues 359 to 375 (QEFRYGLEGGCTDDSLL) are Extracellular-facing.

This sequence belongs to the ADIPOR family. May form homooligomers and heterooligomers with ADIPOR2. Interacts with APPL2 (via BAR domain); hinders the accessibility of APPL1 to ADIPOR1; negatively regulates adiponectin signaling; ADIPOQ dissociates this interaction and facilitates the recruitment of APPL1 to ADIPOR1. Interacts with APPL1; ADIPOQ enhances this interaction; inhibites adiponectin-stimulated binding of APPL2 to ADIPOR1. In terms of tissue distribution, detected in brain and quadriceps muscle (at protein level). Widely expressed. Expressed in heart, kidney, liver, lung, skeletal muscle, white adipose tissue, brown adipose tissue, aorta and spleen. Weakly expressed in brain and testis.

The protein resides in the cell membrane. In terms of biological role, receptor for ADIPOQ, an essential hormone secreted by adipocytes that regulates glucose and lipid metabolism. Required for normal glucose and fat homeostasis and for maintaining a normal body weight. ADIPOQ-binding activates a signaling cascade that leads to increased AMPK activity, and ultimately to increased fatty acid oxidation, increased glucose uptake and decreased gluconeogenesis. Has high affinity for globular adiponectin and low affinity for full-length adiponectin. The polypeptide is Adiponectin receptor protein 1 (Mus musculus (Mouse)).